Reading from the N-terminus, the 257-residue chain is uncharacterized protein (257 aa).

6 consecutive transmembrane segments (helical) span residues 23–43 (VLTDPVSWGLIGSLVVLEGLL), 79–99 (FIFIGLGMLLIKFWWIKVLGA), 131–151 (TFGIFWATVISVELMDLAFSV), 158–178 (FAVSEKVWVLLIGGMLGILMM), 199–219 (AFVLIGIIALKMAGSAFHYEM), and 221–241 (HSVFFIIIIAAFAVTLIIHYI).

Belongs to the TerC family.

It is found in the cell membrane. This is an uncharacterized protein from Bacillus subtilis (strain 168).